A 157-amino-acid polypeptide reads, in one-letter code: RxLR effector protein PITG_04049 (157 aa).

The signal sequence occupies residues M1–S23. A RxLR-dEER motif is present at residues Q51–R65.

It belongs to the RxLR effector family.

It localises to the secreted. It is found in the host cytoplasm. The protein localises to the host nucleus. Its function is as follows. Effector that might be involved in host plant infection. The protein is RxLR effector protein PITG_04049 of Phytophthora infestans (strain T30-4) (Potato late blight agent).